Consider the following 418-residue polypeptide: Serine hydroxymethyltransferase (418 aa).

(6S)-5,6,7,8-tetrahydrofolate is bound by residues Leu121 and 125–127 (GHL). N6-(pyridoxal phosphate)lysine is present on Lys230. Position 356–358 (356–358 (SPF)) interacts with (6S)-5,6,7,8-tetrahydrofolate.

The protein belongs to the SHMT family. Homodimer. It depends on pyridoxal 5'-phosphate as a cofactor.

The protein localises to the cytoplasm. It carries out the reaction (6R)-5,10-methylene-5,6,7,8-tetrahydrofolate + glycine + H2O = (6S)-5,6,7,8-tetrahydrofolate + L-serine. It participates in one-carbon metabolism; tetrahydrofolate interconversion. Its pathway is amino-acid biosynthesis; glycine biosynthesis; glycine from L-serine: step 1/1. In terms of biological role, catalyzes the reversible interconversion of serine and glycine with tetrahydrofolate (THF) serving as the one-carbon carrier. This reaction serves as the major source of one-carbon groups required for the biosynthesis of purines, thymidylate, methionine, and other important biomolecules. Also exhibits THF-independent aldolase activity toward beta-hydroxyamino acids, producing glycine and aldehydes, via a retro-aldol mechanism. The chain is Serine hydroxymethyltransferase from Idiomarina loihiensis (strain ATCC BAA-735 / DSM 15497 / L2-TR).